A 357-amino-acid chain; its full sequence is tRNA pseudouridine synthase Pus10 (357 aa).

Positions 1 to 118 (MNLCRECYGI…TFTFELQIRP (118 aa)) constitute a THUMP domain. Residue Asp187 is the Nucleophile of the active site. Substrate-binding residues include Tyr251 and Tyr322.

The protein belongs to the pseudouridine synthase Pus10 family.

The enzyme catalyses uridine(54) in tRNA = pseudouridine(54) in tRNA. The catalysed reaction is uridine(55) in tRNA = pseudouridine(55) in tRNA. In terms of biological role, responsible for synthesis of pseudouridine from uracil-54 and uracil-55 in the psi GC loop of transfer RNAs. The polypeptide is tRNA pseudouridine synthase Pus10 (Archaeoglobus fulgidus (strain ATCC 49558 / DSM 4304 / JCM 9628 / NBRC 100126 / VC-16)).